The sequence spans 580 residues: Protein O-linked-mannose beta-1,4-N-acetylglucosaminyltransferase 2 (580 aa).

Topologically, residues 1–4 (MHLS) are cytoplasmic. The helical; Signal-anchor for type II membrane protein transmembrane segment at 5-25 (AVLNALLVSVLAAVLWKHVRL) threads the bilayer. Residues 26–580 (REHAAALEEE…PFADVLVCNT (555 aa)) are Lumenal-facing. N-linked (GlcNAc...) asparagine glycans are attached at residues asparagine 99 and asparagine 276. One can recognise a Fibronectin type-III domain in the interval 488 to 580 (ARCQASVQGA…PFADVLVCNT (93 aa)).

This sequence belongs to the glycosyltransferase 61 family.

It is found in the endoplasmic reticulum membrane. It carries out the reaction 3-O-(alpha-D-mannosyl)-L-threonyl-[protein] + UDP-N-acetyl-alpha-D-glucosamine = 3-O-(N-acetyl-beta-D-glucosaminyl-(1-&gt;4)-alpha-D-mannosyl)-L-threonyl-[protein] + UDP + H(+). It functions in the pathway protein modification; protein glycosylation. Its function is as follows. O-linked mannose beta-1,4-N-acetylglucosaminyltransferase that transfers UDP-N-acetyl-D-glucosamine to the 4-position of the mannose to generate N-acetyl-D-glucosamine-beta-1,4-O-D-mannosylprotein. Involved in the biosynthesis of the phosphorylated O-mannosyl trisaccharide (N-acetylgalactosamine-beta-3-N-acetylglucosamine-beta-4-(phosphate-6-)mannose), a carbohydrate structure present in alpha-dystroglycan (DAG1), which is required for binding laminin G-like domain-containing extracellular proteins with high affinity. The polypeptide is Protein O-linked-mannose beta-1,4-N-acetylglucosaminyltransferase 2 (POMGNT2) (Canis lupus familiaris (Dog)).